A 557-amino-acid polypeptide reads, in one-letter code: Inositol-3-phosphate synthase 1 (557 aa).

NAD(+)-binding residues include Gly67, Gly68, Asn69, Asn70, Asp141, Ser177, Val178, Gln188, Arg191, Thr228, Ala229, Asn230, Thr231, Gly278, Ser279, Asp303, Ser306, Asn337, Asn338, Asp339, and Lys352. Ser279 carries the post-translational modification Phosphoserine. A Phosphoserine modification is found at Ser357. NAD(+) is bound by residues Gly390, Asp391, Asp419, and Ser420. Ser523 carries the post-translational modification Phosphoserine. Positions Cys527–Thr557 are disordered.

Belongs to the myo-inositol 1-phosphate synthase family. It depends on NAD(+) as a cofactor. In terms of tissue distribution, expressed in testis (at protein level).

Its subcellular location is the cytoplasm. The enzyme catalyses D-glucose 6-phosphate = 1D-myo-inositol 3-phosphate. The protein operates within polyol metabolism; myo-inositol biosynthesis; myo-inositol from D-glucose 6-phosphate: step 1/2. Functionally, key enzyme in myo-inositol biosynthesis pathway that catalyzes the conversion of glucose 6-phosphate to 1-myo-inositol 1-phosphate in a NAD-dependent manner. Rate-limiting enzyme in the synthesis of all inositol-containing compounds. The polypeptide is Inositol-3-phosphate synthase 1 (ISYNA1) (Bos taurus (Bovine)).